The chain runs to 244 residues: ATP-dependent Clp protease ATP-binding subunit CLPT4, chloroplastic (244 aa).

Residues 1–64 constitute a chloroplast transit peptide; sequence MQALQASRLT…WRSSGRVITR (64 aa). The span at 30 to 48 shows a compositional bias: low complexity; sequence SRPISSGVSSSQELSSRSS. Disordered regions lie at residues 30–55 and 220–244; these read SRPI…TKSW and GRRY…VSFL.

Belongs to the ClpA/ClpB family.

It is found in the plastid. It localises to the chloroplast. Accessory protein regulating the assembly of the plastid Clp protease system. The protein is ATP-dependent Clp protease ATP-binding subunit CLPT4, chloroplastic of Chlamydomonas reinhardtii (Chlamydomonas smithii).